A 431-amino-acid polypeptide reads, in one-letter code: Glutamate-1-semialdehyde 2,1-aminomutase (431 aa).

K265 is subject to N6-(pyridoxal phosphate)lysine.

The protein belongs to the class-III pyridoxal-phosphate-dependent aminotransferase family. HemL subfamily. As to quaternary structure, homodimer. It depends on pyridoxal 5'-phosphate as a cofactor.

The protein localises to the cytoplasm. It carries out the reaction (S)-4-amino-5-oxopentanoate = 5-aminolevulinate. The protein operates within porphyrin-containing compound metabolism; protoporphyrin-IX biosynthesis; 5-aminolevulinate from L-glutamyl-tRNA(Glu): step 2/2. In Vibrio parahaemolyticus serotype O3:K6 (strain RIMD 2210633), this protein is Glutamate-1-semialdehyde 2,1-aminomutase.